The chain runs to 3503 residues: MLRSSLLILLAIVLLGSSQAASHDQERERKLEVFEGVAVDYQIGYIGDFGGIDSGPPYIIVAEAGVETDLAIDRATGEIRTKVKLDRETRASYSLVAIPLSGRNIRVLVTVKDENDNAPTFPQTSMHIEFPENTPREVKRTLLPARDLDLEPYNTQRYNIVSGNVNDAFRLSSHRERDGVLYLDLQISGFLDRETTPGYSLLIEALDGGTPPLRGFMTVNITIQDVNDNQPIFNQSRYFATVPENATVGTSVLQVYASDTDADENGLVEYAINRRQSDKEQMFRIDPRTGAIYINKALDFETKELHELVVVAKDHGEQPLETTAFVSIRVTDVNDNQPTINVIFLSDDASPKISESAQPGEFVARISVHDPDSKTEYANVNVTLNGGDGHFALTTRDNSIYLVIVHLPLDREIVSNYTLSVVATDKGTPPLHASKSIFLRITDVNDNPPEFEQDLYHANVMEVADPGTSVLQVLAHDRDEGLNSALTYSLAETPETHAQWFQIDPQTGLITTRSHIDCETEPVPQLTVVARDGGVPPLSSTATVLVTIHDVNDNEPIFDQSFYNVSVAENEPVGRCILKVSASDPDCGVNAMVNYTIGEGFKHLTEFEVRSASGEICIAGELDFERRSSYEFPVLATDRGGLSTTAMIKMQLTDVNDNRPVFYPREYKVSLRESPKASSQASSTPIVAVVATDPDYGNFGQVSYRIVAGNEAGIFRIDRSTGEIFVVRPDMLSVRTQPMHMLNISATDGGNLRSNADAVVFLSIIDAMQRPPIFEKARYNYYVKEDIPRGTVVGSVIAASGDVAHRSPVRYSIYSGDPDGYFSIETNSGNIRIAKPLDHEAKSQVLLNIQATLGEPPVYGHTQVNIEVEDVNDNAPEFEASMVRISVPESAELGAPLYAAHAHDKDSGSSGQVTYSLVKESGKGLFAIDARSGHLILSQHLDYESSQRHTLIVTATDGGVPSLSTNLTILVDVQDVNDNPPVFEKDEYSVNVSESRSINAQIIQVNASDLDTGNNARITYRIVDAGVDNVTNSISSSDVSQHFGIFPNSGWIYLRAPLDRETRDRYQLTVLATDNGTPAAHAKTRVIVRVLDANDNDPKFQKSKYEFRIEENLRRGSVVGVVTASDLDLGENAAIRYSLLPINSSFQVHPVTGEISTREPLDRELRELYDLVVEARDQGTPVRSARVPVRIHVSDVNDNAPEIADPQEDVVSVREEQPPGTEVVRVRAVDRDHGQNASITYSIVKGRDSDGHGLFSIDPTSGVIRTRVVLDHEERSIYRLGVAASDGGNPPRETVRMLRVEVLDLNDNRPTFTSSSLVFRVREDAALGHVVGSISPIERPADVVRNSVEESFEDLRVTYTLNPLTKDLIEAAFDIDRHSGNLVVARLLDREVQSEFRLEIRALDTTASNNPQSSAITVKIEVADVNDNAPEWPQDPIDLQVSEATPVGTIIHNFTATDADTGTNGDLQYRLIRYFPQLNESQEQAMSLFRMDSLTGALSLQAPLDFEAVQEYLLIVQALDQSSNVTERLQTSVTVRLRILDANDHAPHFVSPNSSGGKTASLFISDATRIGEVVAHIVAVDEDSGDNGQLTYEITGGNGEGRFRINSQTGIIELVKSLPPATEDVEKGGRFNLIIGAKDHGQPEPKKSSLNLHLIVQGSHNNPPRFLQAVYRATILENVPSGSFVLQVTAKSLHGAENANLSYEIPAGVANDLFHVDWQRGIITTRGQFDRESQASYVLPVYVRDANRQSTLSSSAVRKQRSSDSIGDTSNGQHFDVATIYITVGDVNDNSPEFRPGSCYGLSVPENSEPGVIHTVVASDLDEGPNADLIYSITGGNLGNKFSIDSSSGELSARPLDREQHSRYTLQIQASDRGQPKSRQGHCNITIFVEDQNDNAPRFKLSKYTGSVQEDAPLGTSVVQISAVDADLGVNARLVYSLANETQWQFAIDGQSGLITTVGKLDRELQASYNFMVLATDGGRYEVRSATVPVQINVLDINDNRPIFERYPYIGQVPALIQPGQTLLKVQALDADLGANAEIVYSLNAENSAVSAKFRINPSTGALSASQSLASESGKLLHLEVVARDKGNPPQSSLGLIELLIGEAPQGTPVLRFQNETYRVMLKENSPSGTRLLQVVALRSDGRRQKVQFSFGAGNEDGILSLDSLSGEIRVNKPHLLDYDRFSTPSMSALSRGRALHYEEEIDESSEEDPNNSTRSQRALTSSSFALTNSQPNEIRVVLVARTADAPFLASYAELVIELEDENDNSPKFSQKQFVATVSEGNNKGTFVAQVHAFDSDAGSNARLRYHIVDGNHDNAFVIEPAFSGIVRTNIVLDREIRDIYKLKIIATDEGVPQMTGTATIRVQIVDVNDNQPTFPPNNLVTVSEATELGAVITSISANDVDTYPALTYRLGAESTVDIENMSIFALDRYSGKLVLKRRLDYELQQEYELDVIASDAAHEARTVLTVRVNDENDNAPVFLAQQPPAYFAILPAISEISESLSVDFDLLTVNATDADSEGNNSKVIYIIEPAQEGFSVHPSNGVVSVNMSRLQPAVSSSGDYFVRIIAKDAGKPALKSSTLLRVQANDNGSGRSQFLQNQYRAQISEAAPLGSVVLQLGQDALDQSLAIIAGNEESAFELLQSKAIVLVKPLDRERNDLYKLRLVLSHPHGPPLISSLNSSSGISVIITILDANDNFPIFDRSAKYEAEISELAPLRYSIAQLQAIDADQENTPNSEVVYDITSGNDEHMFTIDLVTGVLFVNNRLDYDSGAKSYELIIRACDSHHQRPLCSLQPFRLELHDENDNEPKFPLTEYVHFLAENEPVGSSVFRAHASDLDKGPFGQLNYSIGPAPSDESSWKMFRVDSESGLVTSAFVFDYEQRQRYDMELLASDMGGKKASVAVRVEIESRDEFTPQFTERTYRFVLPAAVALPQGYVVGQVTATDSDSGPDGRVVYQLSAPHSHFKVNRSSGAVLIKRKLKLDGDGDGNLYMDGRDISLVISASSGRHNSLSSMAVVEIALDPLAHPGTNLASAGGSSSGSIGDWAIGLLVAFLLVLCAAAGIFLFIHMRSRKPRNAVKPHLATDNAGVGNTNSYVDPSAFDTIPIRGSISGGAAGAASGQFAPPKYDEIPPFGAHAGSSGAATTSELSGSEQSGSSGRGSAEDDGEDEEIRMINEGPLHHRNGGAGAGSDDGRISDISVQNTQEYLARLGIVDHDPSGAGGGASSMAGSSHPMHLYHDDDATARSDITNLIYAKLNDVTGAGSEIGSSADDAGTTAGSIGTIGTAITHGHGVMSSYGEVPVPVPVVVGGSNVGGSLSSIVHSEEELTGSYNWDYLLDWGPQYQPLAHVFSEIARLKDDTLSEHSGSGASSSAKSKHSSSHSSAGAGSVVLKPPPSAPPTHIPPPLLTNVAPRAINLPMRLPPHLSLAPAHLPRSPIGHEASGSFSTSSAMSPSFSPSLSPLATRSPSISPLGAGPPTHLPHVSLPRHGHAPQPSQRGNVGTRM.

The first 20 residues, Met1–Ala20, serve as a signal peptide directing secretion. The Extracellular portion of the chain corresponds to Ala21–Ala3045. Cadherin domains follow at residues Ser22–Phe121, Pro122–Phe233, Asn234–Ile340, Leu345–Phe451, Glu452–Phe558, Asp559–Phe662, Tyr663–Phe774, Glu775–Phe878, Glu879–Phe983, Glu984–Phe1100, Gln1101–Ile1203, Asp1205–Phe1312, Thr1313–Trp1432, and Pro1433–Phe1549. N-linked (GlcNAc...) asparagine glycans are attached at residues Asn220 and Asn234. Ser236 is modified (phosphoserine). Residues Asn245, Asn381, and Asn416 are each glycosylated (N-linked (GlcNAc...) asparagine). N-linked (GlcNAc...) asparagine glycans are attached at residues Asn564, Asn594, and Asn743. Residues Asn966, Asn991, Asn1006, Asn1029, Asn1143, and Asn1236 are each glycosylated (N-linked (GlcNAc...) asparagine). N-linked (GlcNAc...) asparagine glycosylation is found at Asn1453, Asn1479, Asn1524, and Asn1553. Cadherin domains lie at Gly1556–Phe1666, Leu1667–Phe1794, Pro1796–Phe1899, Lys1900–Phe2004, Glu2005–Leu2111, Gln2114–Phe2269, Ser2270–Phe2375, Phe2375–Phe2479, Ala2489–Phe2595, Leu2596–Phe2699, Arg2701–Phe2809, Pro2810–Phe2916, and Arg2919–Thr3028. N-linked (GlcNAc...) asparagine glycosylation is found at Asn1700, Asn1884, and Asn1940. Asn2115 carries N-linked (GlcNAc...) asparagine glycosylation. The disordered stretch occupies residues Gly2193 to Phe2225. Residues Glu2200–Pro2210 show a composition bias toward acidic residues. Residues Asn2211 and Asn2212 are each glycosylated (N-linked (GlcNAc...) asparagine). Residues Asn2211–Phe2225 are compositionally biased toward polar residues. Asn2421, Asn2511, Asn2520, Asn2547, Asn2588, and Asn2678 each carry an N-linked (GlcNAc...) asparagine glycan. 2 N-linked (GlcNAc...) asparagine glycosylation sites follow: Asn2845 and Asn2967. Residues Ile3046 to Ile3066 traverse the membrane as a helical segment. The Cytoplasmic segment spans residues His3067–Met3503. Disordered stretches follow at residues Ala3114–Ser3195, Leu3360–Pro3404, and Leu3431–Met3503. Composition is skewed to low complexity over residues Gly3133 to Gly3159 and His3363 to Ala3372. Positions Lys3391 to Pro3404 are enriched in pro residues. Residues Ala3440–Thr3463 are compositionally biased toward low complexity. Residues Ser3465 and Ser3469 each carry the phosphoserine modification. The segment covering Gln3492–Met3503 has biased composition (polar residues).

In terms of assembly, interacts (via cytoplasmic region) with Myo31DF. Post-translationally, phosphorylated by fj on Ser/Thr of cadherin domains. Expressed in embryonic ectoderm. In larvae, expression is restricted to imaginal disks and brain.

It localises to the cell membrane. Its subcellular location is the cell junction. In terms of biological role, required for normal morphogenesis of adult structures derived from imaginal disks. Plays a role in planar cell polarity and in determining body left-right asymmetry. Expression in segment H1 of the imaginal ring and interaction with Myo31DF are required to induce changes of cell shape and orientation in segment H2, which then gives rise to normal, dextral looping of the adult hindgut. In Drosophila melanogaster (Fruit fly), this protein is Protein dachsous (ds).